The following is a 1548-amino-acid chain: UDP-glucose:glycoprotein glucosyltransferase (1548 aa).

An N-terminal signal peptide occupies residues 1-22 (MLRAVALCVSVVLIALYTPTSG). The N-linked (GlcNAc...) asparagine glycan is linked to Asn-181. A compositionally biased stretch (basic and acidic residues) spans 243 to 253 (TEYKSQDDAPK). The disordered stretch occupies residues 243 to 265 (TEYKSQDDAPKPEAGSTSDEDLA). Residues Asn-266 and Asn-864 are each glycosylated (N-linked (GlcNAc...) asparagine). Residues 1227-1548 (SANQAATDED…PSHEPKHGEL (322 aa)) form a glucosyltransferase region. Positions 1512-1523 (EDHENSHSRDSA) are enriched in basic and acidic residues. The interval 1512–1548 (EDHENSHSRDSAVDDSVDDSVEVTTVTPSHEPKHGEL) is disordered. The Prevents secretion from ER signature appears at 1545–1548 (HGEL).

It belongs to the glycosyltransferase 8 family. As to quaternary structure, monomer. May interact with CG7484/Sep15. Ca(2+) serves as cofactor. The cofactor is Mn(2+).

It localises to the endoplasmic reticulum lumen. Its subcellular location is the endoplasmic reticulum-Golgi intermediate compartment. The enzyme catalyses N(4)-(alpha-D-Man-(1-&gt;2)-alpha-D-Man-(1-&gt;2)-alpha-D-Man-(1-&gt;3)-[alpha-D-Man-(1-&gt;2)-alpha-D-Man-(1-&gt;3)-[alpha-D-Man-(1-&gt;2)-alpha-D-Man-(1-&gt;6)]-alpha-D-Man-(1-&gt;6)]-beta-D-Man-(1-&gt;4)-beta-D-GlcNAc-(1-&gt;4)-beta-D-GlcNAc)-L-asparaginyl-[protein] (N-glucan mannose isomer 9A1,2,3B1,2,3) + UDP-alpha-D-glucose = N(4)-(alpha-D-Glc-(1-&gt;3)-alpha-D-Man-(1-&gt;2)-alpha-D-Man-(1-&gt;2)-alpha-D-Man-(1-&gt;3)-[alpha-D-Man-(1-&gt;2)-alpha-D-Man-(1-&gt;3)-[alpha-D-Man-(1-&gt;2)-alpha-D-Man-(1-&gt;6)]-alpha-D-Man-(1-&gt;6)]-beta-D-Man-(1-&gt;4)-beta-D-GlcNAc-(1-&gt;4)-beta-D-GlcNAc)-L-asparaginyl-[protein] + UDP + H(+). The protein operates within protein modification; protein glycosylation. Functionally, recognizes glycoproteins with minor folding defects. Reglucosylates single N-glycans near the misfolded part of the protein, thus providing quality control for protein folding in the endoplasmic reticulum. Reglucosylated proteins are recognized by calreticulin for recycling to the endoplasmic reticulum and refolding or degradation. The polypeptide is UDP-glucose:glycoprotein glucosyltransferase (Drosophila melanogaster (Fruit fly)).